The following is a 359-amino-acid chain: S-adenosylmethionine-dependent nucleotide dehydratase RSAD2 (359 aa).

Residues 43–67 (QTPARKISRPESRTSKQKEGSRAPF) form a disordered region. Residues 50–63 (SRPESRTSKQKEGS) show a composition bias toward basic and acidic residues. One can recognise a Radical SAM core domain in the interval 67–287 (FTTPSSVNYH…LERHQSIQCL (221 aa)). The [4Fe-4S] cluster site is built by C81, C85, and C88.

Belongs to the radical SAM superfamily. RSAD2 family. [4Fe-4S] cluster is required as a cofactor.

It is found in the endoplasmic reticulum membrane. In terms of biological role, interferon-inducible iron-sulfur (4FE-4S) cluster-binding antiviral protein which plays a major role in the cell antiviral state induced by type I and type II interferon. This Danio rerio (Zebrafish) protein is S-adenosylmethionine-dependent nucleotide dehydratase RSAD2.